We begin with the raw amino-acid sequence, 174 residues long: Bifunctional protein PyrR (174 aa).

Residues 38–39, 95–103, and arginine 128 contribute to the substrate site; these read SG and DDVLATGRT. The PRPP-binding signature appears at 91 to 103; sequence ILLVDDVLATGRT.

Belongs to the purine/pyrimidine phosphoribosyltransferase family. PyrR subfamily.

The enzyme catalyses UMP + diphosphate = 5-phospho-alpha-D-ribose 1-diphosphate + uracil. Functionally, regulates the transcription of the pyrimidine nucleotide (pyr) operon in response to exogenous pyrimidines. Its function is as follows. Also displays a weak uracil phosphoribosyltransferase activity which is not physiologically significant. This Ralstonia nicotianae (strain ATCC BAA-1114 / GMI1000) (Ralstonia solanacearum) protein is Bifunctional protein PyrR.